The following is a 275-amino-acid chain: Sulfate transporter CysZ (275 aa).

The interval 1 to 24 is disordered; it reads MSSEKSSFPEKPPSFEKPSHSNTA. Positions 13–24 are enriched in basic and acidic residues; that stretch reads PSFEKPSHSNTA. 4 helical membrane passes run 49-69, 93-113, 169-189, and 232-252; these read FVILPLLMNIVLMGGAFWWLF, LIWPLAVLSILLVFSYLFSTI, IVLLLLYFIPGIGQTVAPVLW, and ALVSLFTLVPFLNLVIMPVAV.

It belongs to the CysZ family.

The protein localises to the cell inner membrane. Functionally, high affinity, high specificity proton-dependent sulfate transporter, which mediates sulfate uptake. Provides the sulfur source for the cysteine synthesis pathway. In Pectobacterium atrosepticum (strain SCRI 1043 / ATCC BAA-672) (Erwinia carotovora subsp. atroseptica), this protein is Sulfate transporter CysZ.